Consider the following 410-residue polypeptide: WD repeat-containing protein jip5 (410 aa).

6 WD repeats span residues 9-48 (PLSA…EEEH), 74-113 (RHKG…VENK), 119-160 (AKDG…SKVA), 223-264 (VSST…DQDE), 273-316 (GGGE…VVSE), and 320-357 (DETE…IGGE). Residues 41 to 65 (PTEEEEEHSDDEQASVSSSRNGKGH) form a disordered region. Positions 43-53 (EEEEEHSDDEQ) are enriched in acidic residues. Positions 354–410 (IGGEKRGFGGDSDDSDDDSDDSDHEPKQGDDSRRKRKKQKGKDRGKGPEIMAFADLD) are disordered. Residues 364–376 (DSDDSDDDSDDSD) show a composition bias toward acidic residues. The span at 377–386 (HEPKQGDDSR) shows a compositional bias: basic and acidic residues.

The protein belongs to the WD repeat WDR55 family.

Its subcellular location is the nucleus. It localises to the nucleolus. The chain is WD repeat-containing protein jip5 (jip5) from Emericella nidulans (strain FGSC A4 / ATCC 38163 / CBS 112.46 / NRRL 194 / M139) (Aspergillus nidulans).